Consider the following 256-residue polypeptide: uncharacterized protein (256 aa).

The stretch at 213-243 forms a coiled coil; that stretch reads TMSMEAKLEAAKKTLEKFKQEAASKRAKRTK. Residues 231–256 are disordered; sequence KQEAASKRAKRTKPSGSKTTRSTGRK. Residues 244 to 256 are compositionally biased toward polar residues; it reads PSGSKTTRSTGRK.

This is an uncharacterized protein from Acanthamoeba polyphaga (Amoeba).